Reading from the N-terminus, the 1499-residue chain is Pleiotropic ABC efflux transporter of multiple drugs CDR1 (1499 aa).

Residues Met1–Asp11 show a composition bias toward basic and acidic residues. The tract at residues Met1–His29 is disordered. 3 N-linked (GlcNAc...) asparagine glycosylation sites follow: Asn24, Asn96, and Asn99. An ABC transporter 1 domain is found at Val146 to Glu399. At Ser307 the chain carries Phosphoserine. N-linked (GlcNAc...) asparagine glycosylation occurs at Asn323. Phosphoserine is present on Ser484. The chain crosses the membrane as a helical span at residues Gly510–Phe530. A glycan (N-linked (GlcNAc...) asparagine) is linked at Asn537. The next 5 membrane-spanning stretches (helical) occupy residues Ala548–Phe568, Val597–Phe617, Gly622–Phe642, Ala654–Ile674, and Gly763–Glu783. Asn813 carries N-linked (GlcNAc...) asparagine glycosylation. Residues Phe857 to Gly1099 form the ABC transporter 2 domain. Gly893 to Thr900 contributes to the ATP binding site. Asn1159 carries N-linked (GlcNAc...) asparagine glycosylation. Transmembrane regions (helical) follow at residues Tyr1193–Phe1213, Ala1228–Val1248, and Ile1278–Phe1298. An N-linked (GlcNAc...) asparagine glycan is attached at Asn1301. Transmembrane regions (helical) follow at residues Leu1314 to Ile1334 and Ala1342 to Val1362. Asn1412 carries an N-linked (GlcNAc...) asparagine glycan. The chain crosses the membrane as a helical span at residues Trp1466 to Leu1486.

The protein belongs to the ABC transporter superfamily. Phosphorylated at Ser-307 and Ser-484. Ser-307 and Ser-484 are dephosphorylated on glucose depletion and independently rephosphorylated during glucose exposure or under stress.

The protein localises to the cell membrane. Its activity is regulated as follows. Inhibited by clorgyline. Inhibited by RC21v3, a 4-methoxy-2,3,6-trimethylbenzenesulphonyl derivative of the D-octapeptide D-FFKWQRRR, via the interaction with the ectodomain. FK506, enniatin, milbemycin alpha-11, and milbemycin beta-9 also inhibit CDR1 activity. Inhibited by milbemycin A3/A4 oxim derivatives. In terms of biological role, pleiotropic ABC efflux transporter that transports and confers resistance to structurally and functionally unrelated compounds including rhodamine 6G, Nile red, caspofungin, cycloheximide, or azoles such as fluconazole, itraconazole, ketoconazole, posaconazole, voriconazole, and isavuconazole. Chlorbromuron, itraconazole, yohimbine, ketoconazole, miconazole, clotrimazole, DE-11, tamoxifen, quinidine, verapamil can compete for rhodamine 6G's binding site(s) while compounds such as propanil, chloramphenicol, benomyl, voriconazole, tritylimidazole, ketoconazole, miconazole, tamoxifen, gefitinib shared binding site(s) with fluconazole. Nile red mediated efflux appears to be relatively more specific since only five compounds such as ZW3-12, rhodamine 123, miconazole, clotrimazole, and itraconazole can inhibit its accumulation. Does not use as substrates 4-nitroquinoline 1-oxide (4-NQO) and disulfiram. Does not play a role in the azole resistance in mature biofilms. The polypeptide is Pleiotropic ABC efflux transporter of multiple drugs CDR1 (Candida glabrata (strain ATCC 2001 / BCRC 20586 / JCM 3761 / NBRC 0622 / NRRL Y-65 / CBS 138) (Yeast)).